The sequence spans 487 residues: Probable nuclear hormone receptor HR3 (487 aa).

The nuclear receptor DNA-binding region spans 48-123; the sequence is IIPCKVCGDK…LGMSRDAVKF (76 aa). 2 consecutive NR C4-type zinc fingers follow at residues 51–71 and 87–111; these read CKVCGDKSSGVHYGVITCEGC and CPRNKQCVVDRVNRNRCQYCRLQKC. Residues 145-176 are disordered; sequence MRAQSDAAPDSSVYDTQTPSSSDQLHHNNYNS. Polar residues predominate over residues 157–167; that stretch reads VYDTQTPSSSD. The NR LBD domain maps to 237 to 480; sequence INDVLIKTLA…PALYKELFSI (244 aa).

It belongs to the nuclear hormone receptor family. NR1 subfamily.

Its subcellular location is the nucleus. In terms of biological role, putative receptor whose ligand is not yet known. The chain is Probable nuclear hormone receptor HR3 from Drosophila melanogaster (Fruit fly).